A 63-amino-acid chain; its full sequence is Large ribosomal subunit protein uL29 (63 aa).

Belongs to the universal ribosomal protein uL29 family.

The protein is Large ribosomal subunit protein uL29 of Tolumonas auensis (strain DSM 9187 / NBRC 110442 / TA 4).